We begin with the raw amino-acid sequence, 441 residues long: FAM10 family protein At4g22670 (441 aa).

A disordered region spans residues 41–114 (KIPTGVHEED…PQKMGDSSVE (74 aa)). A compositionally biased stretch (basic and acidic residues) spans 46 to 55 (VHEEDKDTKP). 2 stretches are compositionally biased toward acidic residues: residues 61-71 (EESDDDMDETE) and 78-102 (EEEEEEDEIVESDVELEGDTVEPDN). Phosphoserine occurs at positions 63 and 89. 3 TPR repeats span residues 121 to 156 (EAAQEAKGKAMEALSEGNFDEAIEHLTRAITLNPTS), 158 to 190 (IMYGNRASVYIKLKKPNAAIRDANAALEINPDS), and 191 to 224 (AKGYKSRGMARAMLGEWAEAAKDLHLASTIDYDE). Residues 236 to 285 (NAHKLEEHRRKYDRLRKEREDKKAERDRLRRRAEAQAAYDKAKKEEQSSS) are a coiled coil. Over residues 244–282 (RRKYDRLRKEREDKKAERDRLRRRAEAQAAYDKAKKEEQ) the composition is skewed to basic and acidic residues. Positions 244–314 (RRKYDRLRKE…MPGGFPGGMG (71 aa)) are disordered. Gly residues predominate over residues 289-314 (SGGGFPGGMPGGFPGGMPGGFPGGMG). The 40-residue stretch at 391–430 (DPELMTAFSDPEVMAALQDVMKNPANLAKHQANPKVAPVI) folds into the STI1 domain.

It belongs to the FAM10 family.

This is FAM10 family protein At4g22670 from Arabidopsis thaliana (Mouse-ear cress).